Here is a 742-residue protein sequence, read N- to C-terminus: Protein-lysine N-methyltransferase SMYD4 (742 aa).

110–112 (RSA) provides a ligand contact to S-adenosyl-L-methionine. The SET domain maps to 230-569 (SSLSLNFSTE…SGQEIFHCYG (340 aa)). Zn(2+) contacts are provided by Cys-295, Cys-298, Cys-308, Cys-311, Cys-317, Cys-321, His-330, and Cys-334. An MYND-type zinc finger spans residues 295 to 334 (CHHCLKQLLASIPCCGCSYAKYCSQNCADVAWEQYHRTEC). S-adenosyl-L-methionine contacts are provided by residues Asn-418, 534 to 535 (NH), and Tyr-568.

This sequence belongs to the class V-like SAM-binding methyltransferase superfamily.

It localises to the nucleus. The protein resides in the cytoplasm. The enzyme catalyses L-lysyl-[protein] + S-adenosyl-L-methionine = N(6)-methyl-L-lysyl-[protein] + S-adenosyl-L-homocysteine + H(+). In terms of biological role, protein-lysine N-methyltransferase. Monomethylates PRMT5, modulating its transcriptional activity. May also act as a histone methyltransferase. Plays a critical role in cardiac development. Acts as a key epigenetic regulator of gene expression during cardiac development via its dual activities as a methyltransferase and negative regulator of HDAC1. The polypeptide is Protein-lysine N-methyltransferase SMYD4 (SMYD4) (Gallus gallus (Chicken)).